The sequence spans 437 residues: Phosphomethylpyrimidine synthase (437 aa).

Substrate-binding positions include asparagine 69, methionine 98, tyrosine 127, histidine 163, 185–187, 226–229, and glutamate 265; these read SRG and DACR. Histidine 269 contacts Zn(2+). Tyrosine 292 contacts substrate. Histidine 333 lines the Zn(2+) pocket. Cysteine 409, cysteine 412, and cysteine 416 together coordinate [4Fe-4S] cluster.

The protein belongs to the ThiC family. [4Fe-4S] cluster is required as a cofactor.

It carries out the reaction 5-amino-1-(5-phospho-beta-D-ribosyl)imidazole + S-adenosyl-L-methionine = 4-amino-2-methyl-5-(phosphooxymethyl)pyrimidine + CO + 5'-deoxyadenosine + formate + L-methionine + 3 H(+). The protein operates within cofactor biosynthesis; thiamine diphosphate biosynthesis. Functionally, catalyzes the synthesis of the hydroxymethylpyrimidine phosphate (HMP-P) moiety of thiamine from aminoimidazole ribotide (AIR) in a radical S-adenosyl-L-methionine (SAM)-dependent reaction. The polypeptide is Phosphomethylpyrimidine synthase (Clostridium botulinum (strain Okra / Type B1)).